The primary structure comprises 77 residues: Small ribosomal subunit protein uS17 (77 aa).

Belongs to the universal ribosomal protein uS17 family. In terms of assembly, part of the 30S ribosomal subunit.

Its function is as follows. One of the primary rRNA binding proteins, it binds specifically to the 5'-end of 16S ribosomal RNA. This Wolbachia sp. subsp. Brugia malayi (strain TRS) protein is Small ribosomal subunit protein uS17.